Reading from the N-terminus, the 1176-residue chain is MAERKGTAKVDFLKKIEKEIQQKWDTERVFEVNASSLEKQTSKGKYFVTFPYPYMNGRLHLGHTFSLSKCEFAVGYQRLKGKCCLFPFGLHCTGMPIKACADKLKREIELYGCPPDFPDEEDEEEETNVKTEDTRIKDKAKGKKSKAAAKAGSSKYQWGIMKSLGLSDEEIVKFSEAEHWLDYFPPLAIQDLKRLGLKVDWRRSFITTDVNPYYDSFVRWQFLTLRERNKIKFGKRYTIYSPKDGQPCMDHDRQTGEGVGPQEYTLLKLKVLEPYPSKLSGLKGKNIFLVAATLRPETLFGQTNCWVRPDMKYIGFETVNGDIFICTQKAARNMSYQGFTKDNGVVPVVKELMGEEILGASLSAPLTSYKVIYVLPMLTIKEDKGTGVVTSVPSDSPDDIAALRDLKKKQALRAKYGIRDDMVLPFEPVPVIEIPGFGNLSAVTICDELKIQSQNDREKLAEAKEKIYLKGFYEGIMLVDGFKGQKVQDVKKTIQKKMIDAGDALIYMEPEKQVMSRSSDECVVALCDQWYLDYGEENWKKQTSQCLKNLETFCEETRRNFEATLGWLQEHACSRTYGLGTHLPWDEQWLIESLSDSTIYMAFYTVAHLLQGGNLHGQAESPLGIRPQQMTKEVWDYVFFKEAPFPKTQIAKEKLDQLKQEFEFWYPVDLRVSGKDLVPNHLSYYLYNHVAMWPEQSDKWPTAVRANGHLLLNSEKMSKSTGNFLTLTQAIDKFSADGMRLALADAGDTVEDANFVEAMADAGILRLYTWVEWVKEMVANWDSLRSGPANTFNDRVFASELNAGIIKTDQNYEKMMFKEALKTGFFEFQAAKDKYRELAVEGMHRELVFRFIEVQTLLLAPFCPHLCEHIWTLLGKPDSIMNASWPVAGPVDEVLIHSSQYLMEVTHDLRLRLKNYMMPAKGKKTDKQPLQKPSHCTIYVAKNYPPWQHTTLSVLRKHFEANNRKLPDNKVIASELGSMPELKKYMKKVMPFVAMIKENLEKMGPRILDLQLEFDEKAVLMENIVYLTNSLELEHIEVKFASEAEDKIREDCCPGKPLNVFRIEPGVSISLVNPQPSNGHFSTKIEIRQGDNCDSIIRRLMKMNRGIKDLSKVKLMRFDDPLLGPRRVPVLGKEHTEKTPISEHAVFNVDLMSKKIHLTENGIRVDIGDTIIYLVH.

L-leucine is bound by residues Tyr52 and Tyr54. A 'HIGH' region motif is present at residues 60–63 (HLGH). The segment at 115–142 (PDFPDEEDEEEETNVKTEDTRIKDKAKG) is disordered. A compositionally biased stretch (acidic residues) spans 117 to 126 (FPDEEDEEEE). Residues 127–139 (TNVKTEDTRIKDK) are compositionally biased toward basic and acidic residues. Phosphoserine is present on Ser167. The interval 260-509 (GPQEYTLLKL…DAGDALIYME (250 aa)) is editing domain. The L-leucine site is built by Leu594 and Ser597. Residues 716–720 (KMSKS) carry the 'KMSKS' region motif. Position 719 (Lys719) interacts with ATP. At Ser720 the chain carries Phosphoserine. N6-acetyllysine occurs at positions 970 and 1047.

The protein belongs to the class-I aminoacyl-tRNA synthetase family.

Its subcellular location is the cytoplasm. The catalysed reaction is tRNA(Leu) + L-leucine + ATP = L-leucyl-tRNA(Leu) + AMP + diphosphate. It catalyses the reaction L-methionyl-tRNA(Leu) + H2O = tRNA(Leu) + L-methionine + H(+). With respect to regulation, 5-fluoro-1,3-dihydro-1-hydroxy-1,2-benzoxaborole inhibits LARS1 by forming a covalent adduct with the 3' adenosine of tRNA(Leu) at the editing site, thus locking the enzyme in an inactive conformation. Its function is as follows. Aminoacyl-tRNA synthetase that catalyzes the specific attachment of leucine to its cognate tRNA (tRNA(Leu)). It performs tRNA aminoacylation in a two-step reaction: Leu is initially activated by ATP to form a leucyl-adenylate (Leu-AMP) intermediate; then the leucyl moiety is transferred to the acceptor 3' end of the tRNA to yield leucyl-tRNA. To improve the fidelity of catalytic reactions, it is also able to hydrolyze misactivated aminoacyl-adenylate intermediates (pre-transfer editing) and mischarged aminoacyl-tRNAs (post-transfer editing). The protein is Leucine--tRNA ligase, cytoplasmic (LARS1) of Pongo abelii (Sumatran orangutan).